The following is a 625-amino-acid chain: 1-deoxy-D-xylulose-5-phosphate synthase 1 (625 aa).

Thiamine diphosphate is bound by residues histidine 74 and 115–117; that span reads GHT. Aspartate 146 is a binding site for Mg(2+). Residues 147–148, asparagine 175, tyrosine 286, and glutamate 368 contribute to the thiamine diphosphate site; that span reads GS. Asparagine 175 is a Mg(2+) binding site.

It belongs to the transketolase family. DXPS subfamily. As to quaternary structure, homodimer. It depends on Mg(2+) as a cofactor. Thiamine diphosphate serves as cofactor.

It catalyses the reaction D-glyceraldehyde 3-phosphate + pyruvate + H(+) = 1-deoxy-D-xylulose 5-phosphate + CO2. Its pathway is metabolic intermediate biosynthesis; 1-deoxy-D-xylulose 5-phosphate biosynthesis; 1-deoxy-D-xylulose 5-phosphate from D-glyceraldehyde 3-phosphate and pyruvate: step 1/1. Its function is as follows. Catalyzes the acyloin condensation reaction between C atoms 2 and 3 of pyruvate and glyceraldehyde 3-phosphate to yield 1-deoxy-D-xylulose-5-phosphate (DXP). This chain is 1-deoxy-D-xylulose-5-phosphate synthase 1, found in Geobacter metallireducens (strain ATCC 53774 / DSM 7210 / GS-15).